The primary structure comprises 299 residues: MAEEQAYHVNKGLECIKALRARPLDPLVVEEALAAWVETSEGQTLDRMSSDEAEADHQDISKPCFPAAGPGKSSMSRCHDQGLGGSNSCDEELGAFIGDSSMHSTEVQHYHVYDHSGEKVEGVEDADSILVQSGADDGVEVWGGDEESENSDVDSGEPDPEGSAPADWGSSPISPATRASDVETVEGDEIQKLLEDQSRIRKMTKAGKTLVVPPIPSQERPTASEKPIKKGHRREIDLIWNDGRVFIDRWCNPTCSKVTVGTVRAKCICGECPRVCEQCITDSGIENRIWYHNLADIPE.

Residues 137–160 (DGVEVWGGDEESENSDVDSGEPDP) are compositionally biased toward acidic residues. Disordered stretches follow at residues 137–186 (DGVE…ETVE) and 205–229 (KAGK…KPIK). Zn(2+) contacts are provided by H232, C251, C255, C267, C269, C272, C276, and C279.

Belongs to the paramyxoviruses V protein family. In terms of assembly, interacts with host IFIH1/MDA5 and DHX58/LGP2. Interacts with host TYK2; this interaction inhibits the type I interferon signaling pathway.

Its subcellular location is the host cytoplasm. Plays an essential role in the inhibition of host immune response. Prevents the establishment of cellular antiviral state by blocking interferon-alpha/beta (IFN-alpha/beta) production and signaling pathway. Interacts with host IFIH1/MDA5 and DHX58/LGP2 to inhibit the transduction pathway involved in the activation of IFN-beta promoter, thus protecting the virus against cell antiviral state. Blocks the type I interferon signaling pathway by interacting with host TYK2 and thereby inhibiting downstream STAT1 and STAT2 phosphorylation. This chain is Non-structural protein V (P/V), found in Rinderpest virus (strain Kabete O) (RDV).